The following is a 428-amino-acid chain: Serine--tRNA ligase (428 aa).

Residue 231–233 (TAE) participates in L-serine binding. Position 262–264 (262–264 (RSE)) interacts with ATP. Residue Glu285 coordinates L-serine. Residue 349–352 (EISS) coordinates ATP. Ser385 serves as a coordination point for L-serine.

The protein belongs to the class-II aminoacyl-tRNA synthetase family. Type-1 seryl-tRNA synthetase subfamily. In terms of assembly, homodimer. The tRNA molecule binds across the dimer.

It is found in the cytoplasm. The enzyme catalyses tRNA(Ser) + L-serine + ATP = L-seryl-tRNA(Ser) + AMP + diphosphate + H(+). It catalyses the reaction tRNA(Sec) + L-serine + ATP = L-seryl-tRNA(Sec) + AMP + diphosphate + H(+). It functions in the pathway aminoacyl-tRNA biosynthesis; selenocysteinyl-tRNA(Sec) biosynthesis; L-seryl-tRNA(Sec) from L-serine and tRNA(Sec): step 1/1. Its function is as follows. Catalyzes the attachment of serine to tRNA(Ser). Is also able to aminoacylate tRNA(Sec) with serine, to form the misacylated tRNA L-seryl-tRNA(Sec), which will be further converted into selenocysteinyl-tRNA(Sec). This Cellvibrio japonicus (strain Ueda107) (Pseudomonas fluorescens subsp. cellulosa) protein is Serine--tRNA ligase.